The primary structure comprises 54 residues: UPF0391 membrane protein Pfl01_0044 (54 aa).

2 consecutive transmembrane segments (helical) span residues 4-24 (WAIT…GGIA) and 29-49 (GIAK…FFFG).

Belongs to the UPF0391 family.

It is found in the cell membrane. This is UPF0391 membrane protein Pfl01_0044 from Pseudomonas fluorescens (strain Pf0-1).